The sequence spans 223 residues: Cytidylate kinase (223 aa).

17-25 (GPTASGKGT) contributes to the ATP binding site.

Belongs to the cytidylate kinase family. Type 1 subfamily.

It localises to the cytoplasm. The enzyme catalyses CMP + ATP = CDP + ADP. It catalyses the reaction dCMP + ATP = dCDP + ADP. This chain is Cytidylate kinase, found in Bordetella bronchiseptica (strain ATCC BAA-588 / NCTC 13252 / RB50) (Alcaligenes bronchisepticus).